A 360-amino-acid polypeptide reads, in one-letter code: MTATLERRESASLWERFCTWITSTENRLYIGWFGVVMIPTLLTATSVFIIAFVAAPPVDIDGIREPVAGSLLYGNNIISGAIIPSSAAIGIHFYPIWEAASLDEWLYNGGPYQLIVLHFLLGVCCYIGREWELSYRLGMRPWISVAFTAPVAAAAAVFLVYPIGQGSFSDGMPLGISGTFNFMLVFQAEHNILMHPFHQLGVAGVFGGSLFSAMHGSLVTSSLIRETTENESANYGYKFGQEEETYNIVAAHGYFGRLIFQYASFNNSRALHFFLGAWPVVGIWLTSMSVSTMALNLNGFNFNQSVVDSQGRVINTWADILNRANLGMEVMHERNAHNFPLDLASGDSCPVALVAPSING.

3 consecutive transmembrane segments (helical) span residues 29–46 (YIGW…TATS), 118–133 (HFLL…EWEL), and 142–156 (WISV…AAAA). Chlorophyll a is bound at residue His-118. Residue Tyr-126 participates in pheophytin a binding. Residues Asp-170 and Glu-189 each coordinate [CaMn4O5] cluster. A helical membrane pass occupies residues 197–218 (FHQLGVAGVFGGSLFSAMHGSL). His-198 provides a ligand contact to chlorophyll a. Residues His-215 and 264 to 265 (SF) contribute to the a quinone site. His-215 lines the Fe cation pocket. His-272 contributes to the Fe cation binding site. A helical membrane pass occupies residues 274 to 288 (FLGAWPVVGIWLTSM). 4 residues coordinate [CaMn4O5] cluster: His-332, Glu-333, Asp-342, and Ala-344. Positions 345-360 (SGDSCPVALVAPSING) are excised as a propeptide.

The protein belongs to the reaction center PufL/M/PsbA/D family. In terms of assembly, PSII is composed of 1 copy each of membrane proteins PsbA, PsbB, PsbC, PsbD, PsbE, PsbF, PsbH, PsbI, PsbJ, PsbK, PsbL, PsbM, PsbT, PsbX, PsbY, PsbZ, Psb30/Ycf12, at least 3 peripheral proteins of the oxygen-evolving complex and a large number of cofactors. It forms dimeric complexes. The D1/D2 heterodimer binds P680, chlorophylls that are the primary electron donor of PSII, and subsequent electron acceptors. It shares a non-heme iron and each subunit binds pheophytin, quinone, additional chlorophylls, carotenoids and lipids. D1 provides most of the ligands for the Mn4-Ca-O5 cluster of the oxygen-evolving complex (OEC). There is also a Cl(-1) ion associated with D1 and D2, which is required for oxygen evolution. The PSII complex binds additional chlorophylls, carotenoids and specific lipids. is required as a cofactor. Tyr-161 forms a radical intermediate that is referred to as redox-active TyrZ, YZ or Y-Z. In terms of processing, C-terminally processed by CTPA; processing is essential to allow assembly of the oxygen-evolving complex and thus photosynthetic growth.

The protein resides in the plastid. Its subcellular location is the chloroplast thylakoid membrane. It catalyses the reaction 2 a plastoquinone + 4 hnu + 2 H2O = 2 a plastoquinol + O2. Functionally, photosystem II (PSII) is a light-driven water:plastoquinone oxidoreductase that uses light energy to abstract electrons from H(2)O, generating O(2) and a proton gradient subsequently used for ATP formation. It consists of a core antenna complex that captures photons, and an electron transfer chain that converts photonic excitation into a charge separation. The D1/D2 (PsbA/PsbD) reaction center heterodimer binds P680, the primary electron donor of PSII as well as several subsequent electron acceptors. This chain is Photosystem II protein D1, found in Palmaria palmata (Dulse).